Reading from the N-terminus, the 272-residue chain is 3-methyl-2-oxobutanoate hydroxymethyltransferase (272 aa).

Residues aspartate 51 and aspartate 90 each coordinate Mg(2+). 3-methyl-2-oxobutanoate is bound by residues 51–52 (DS), aspartate 90, and lysine 118. A Mg(2+)-binding site is contributed by glutamate 120. Glutamate 187 functions as the Proton acceptor in the catalytic mechanism.

Belongs to the PanB family. In terms of assembly, homodecamer; pentamer of dimers. Mg(2+) is required as a cofactor.

The protein resides in the cytoplasm. It carries out the reaction 3-methyl-2-oxobutanoate + (6R)-5,10-methylene-5,6,7,8-tetrahydrofolate + H2O = 2-dehydropantoate + (6S)-5,6,7,8-tetrahydrofolate. It participates in cofactor biosynthesis; (R)-pantothenate biosynthesis; (R)-pantoate from 3-methyl-2-oxobutanoate: step 1/2. Its function is as follows. Catalyzes the reversible reaction in which hydroxymethyl group from 5,10-methylenetetrahydrofolate is transferred onto alpha-ketoisovalerate to form ketopantoate. The protein is 3-methyl-2-oxobutanoate hydroxymethyltransferase of Xylella fastidiosa (strain M23).